The sequence spans 406 residues: E3 ubiquitin-protein ligase RING1 (406 aa).

Residue T24 is modified to Phosphothreonine. The necessary for transcriptional repression stretch occupies residues 30–234; sequence MDGTEIAVSP…GGAGSEDSGD (205 aa). S38 is subject to Phosphoserine. The segment at 48–88 adopts an RING-type zinc-finger fold; the sequence is CPICLDMLKNTMTTKECLHRFCSDCIVTALRSGNKECPTCR. A phosphoserine mark is found at S140, S187, and S190. 2 disordered regions span residues 151 to 263 and 309 to 354; these read HRAQ…GEIE and QQQE…PSLE. Positions 175-187 are enriched in acidic residues; that stretch reads EPGEGEGDGEDIS. The Nuclear localization signal motif lies at 201 to 204; that stretch reads KRPR. The span at 205 to 228 shows a compositional bias: gly residues; the sequence is GGGAGGSSVGTGGGAAGGACGGAG. Residue T215 is modified to Phosphothreonine. Residues S229 and S232 each carry the phosphoserine modification. The necessary for interaction with CBX2 stretch occupies residues 230–406; the sequence is EDSGDRGGTL…LCYAPTKDPK (177 aa). The span at 235–244 shows a compositional bias: gly residues; that stretch reads RGGTLGGGTL. A compositionally biased stretch (pro residues) spans 246–258; the sequence is PPSPPGAPSPPEP. 2 positions are modified to phosphoserine: S248 and S254. Residues 317–343 are compositionally biased toward gly residues; it reads GGPGGGASDTGGPDGGGGERGVSGGGE.

As to quaternary structure, component of chromatin-associated Polycomb (PcG) complexes. Part of the E2F6.com-1 complex in G0 phase composed of E2F6, MGA, MAX, TFDP1, CBX3, BAT8, EUHMTASE1, RING1, RNF2/RING2 MBLR, L3MBTL2 and YAF2. Interacts with CBX2 and PCGF6. Component of a PRC1-like complex. Component of repressive BCOR complex containing Polycomb group subcomplex at least composed of RYBP, PCGF1, BCOR and RNF2/RING2. Interacts with BMI1, PHC2, PCGF2, RNF2; CBX6, CBX7 and CBX8. Interacts with MN1. Interacts with USP26.

Its subcellular location is the nucleus speckle. It carries out the reaction S-ubiquitinyl-[E2 ubiquitin-conjugating enzyme]-L-cysteine + [acceptor protein]-L-lysine = [E2 ubiquitin-conjugating enzyme]-L-cysteine + N(6)-ubiquitinyl-[acceptor protein]-L-lysine.. The protein operates within protein modification; protein ubiquitination. In terms of biological role, constitutes one of the E3 ubiquitin-protein ligases that mediate monoubiquitination of 'Lys-119' of histone H2A, thereby playing a central role in histone code and gene regulation. H2A 'Lys-119' ubiquitination gives a specific tag for epigenetic transcriptional repression and participates in X chromosome inactivation of female mammals. Essential component of a Polycomb group (PcG) multiprotein PRC1-like complex, a complex class required to maintain the transcriptionally repressive state of many genes, including Hox genes, throughout development. PcG PRC1 complex acts via chromatin remodeling and modification of histones, rendering chromatin heritably changed in its expressibility. Compared to RNF2/RING2, it does not have the main E3 ubiquitin ligase activity on histone H2A, and it may rather act as a modulator of RNF2/RING2 activity. The sequence is that of E3 ubiquitin-protein ligase RING1 from Rattus norvegicus (Rat).